Reading from the N-terminus, the 332-residue chain is Protein phosphatase PTC7 homolog fig (332 aa).

A PPM-type phosphatase domain is found at 70–325; it reads KPCSPRERAN…DDITLILASV (256 aa). Residues Asp-102, Gly-103, and Asp-247 each contribute to the Mn(2+) site.

The protein belongs to the PP2C family. Mg(2+) serves as cofactor. Requires Mn(2+) as cofactor.

The catalysed reaction is O-phospho-L-seryl-[protein] + H2O = L-seryl-[protein] + phosphate. The enzyme catalyses O-phospho-L-threonyl-[protein] + H2O = L-threonyl-[protein] + phosphate. The protein is Protein phosphatase PTC7 homolog fig of Drosophila ananassae (Fruit fly).